The chain runs to 119 residues: Large ribosomal subunit protein uL18 (119 aa).

It belongs to the universal ribosomal protein uL18 family. Part of the 50S ribosomal subunit; part of the 5S rRNA/L5/L18/L25 subcomplex. Contacts the 5S and 23S rRNAs.

Functionally, this is one of the proteins that bind and probably mediate the attachment of the 5S RNA into the large ribosomal subunit, where it forms part of the central protuberance. The chain is Large ribosomal subunit protein uL18 from Clostridium beijerinckii (strain ATCC 51743 / NCIMB 8052) (Clostridium acetobutylicum).